Reading from the N-terminus, the 670-residue chain is Cyclic di-GMP phosphodiesterase PdeA (670 aa).

The 243-residue stretch at 428–670 (QNKIFQYILK…GFLWHKPEPI (243 aa)) folds into the EAL domain.

It carries out the reaction 3',3'-c-di-GMP + H2O = 5'-phosphoguanylyl(3'-&gt;5')guanosine + H(+). In terms of biological role, phosphodiesterase (PDE) that catalyzes the hydrolysis of cyclic diguanylate (c-di-GMP) to pGpG. This Borreliella burgdorferi (strain ATCC 35210 / DSM 4680 / CIP 102532 / B31) (Borrelia burgdorferi) protein is Cyclic di-GMP phosphodiesterase PdeA.